Consider the following 274-residue polypeptide: MRSNNNNPLTRDEILSRYFPQYRPAVAASQGLSGGSCIIAHDTHRIVLRRHHDPDAPPAHFLRHYRALSQLPASLAPRALFYTPGWMAVEYLHGVVNSALPDAEELAALLYHLQQQPRFGWRIALSPLLAQYWSCCDPARRTPFWLRRLKQLQKNGEPRPLRLAPLHMDVHGDNIVLTSAGLRLIDWEYAGDGDIALELAAVWVEDERQHRQLADAYAARARIDARQLWRQIRLWHPWVIMLKAGWFEYRWRQTGEQQFIRLADETWRQLRMKG.

This sequence belongs to the thiamine kinase family.

The catalysed reaction is thiamine + ATP = thiamine phosphate + ADP + H(+). Its pathway is cofactor biosynthesis; thiamine diphosphate biosynthesis; thiamine phosphate from thiamine: step 1/1. In terms of biological role, catalyzes the ATP-dependent phosphorylation of thiamine to thiamine phosphate. Is involved in thiamine salvage. The polypeptide is Thiamine kinase (Salmonella gallinarum (strain 287/91 / NCTC 13346)).